Here is a 630-residue protein sequence, read N- to C-terminus: Zinc finger protein MSN4 (630 aa).

M1 is modified (N-acetylmethionine). Residues 37 to 56 are compositionally biased toward low complexity; sequence TTNVSATSSNDNSANNSISS. 2 disordered regions span residues 37–77 and 115–137; these read TTNV…ATNT and FVND…DKIY. S178 carries the phosphoserine modification. A 9aaTAD motif is present at residues 237 to 245; it reads SILEDFVSS. Phosphoserine is present on S263. The span at 292–303 shows a compositional bias: polar residues; that stretch reads KNSSNSKPTQQI. Disordered regions lie at residues 292–322 and 360–379; these read KNSS…SPTT and SISS…RQQR. Residues S316 and S319 each carry the phosphoserine modification. Positions 360-373 are enriched in low complexity; that stretch reads SISSSLNRISHSSS. The residue at position 479 (T479) is a Phosphothreonine. The disordered stretch occupies residues 502 to 566; the sequence is TSQAHHAAQH…KSITTIDPNN (65 aa). Positions 504 to 515 are enriched in low complexity; that stretch reads QAHHAAQHHQQQ. 2 stretches are compositionally biased toward polar residues: residues 516-525 and 532-547; these read PTKQATVSPN and SSVT…NNNG. A Phosphoserine modification is found at S558. 2 C2H2-type zinc fingers span residues 573–596 and 602–624; these read FKCK…RSVH and FACM…LKTH.

The protein localises to the cytoplasm. Its subcellular location is the nucleus. Positive transcriptional factor that acts as a component of the stress responsive system. Recognizes and binds to the stress response element (STRE) which is involved in the response to various forms of stress (heat, oxidative, osmotic, etc.). Involved in the regulation of the CTT1, DDR2, HSP12 genes. In Saccharomyces cerevisiae (strain ATCC 204508 / S288c) (Baker's yeast), this protein is Zinc finger protein MSN4 (MSN4).